The sequence spans 528 residues: Transcriptional activator protein UGA3 (528 aa).

Residues Cys-17–Cys-44 constitute a DNA-binding region (zn(2)-C6 fungal-type). A Nuclear localization signal motif is present at residues Ser-55 to Asp-62.

UGA3 proteins associate in oligomers, at least in the presence of inducer.

It is found in the nucleus. GABA-dependent positive regulation of genes required for catabolism of GABA (UGA4, UGA1, and UGA2). The sequence is that of Transcriptional activator protein UGA3 (UGA3) from Saccharomyces cerevisiae (strain ATCC 204508 / S288c) (Baker's yeast).